The sequence spans 805 residues: Angiotensin-converting enzyme 2 (805 aa).

The N-terminal stretch at 1 to 17 (MSGSSWLLLSLVAVTAA) is a signal peptide. Topologically, residues 18–740 (QSTIEEQAKT…LGPPNQPPVS (723 aa)) are extracellular. Residues 19–607 (STIEEQAKTF…QNKNSFVGWS (589 aa)) enclose the Peptidase M2 domain. Asn-53, Asn-90, and Asn-103 each carry an N-linked (GlcNAc...) asparagine glycan. Cysteines 133 and 141 form a disulfide. Arg-169 contacts chloride. Arg-273 contributes to the substrate binding site. N-linked (GlcNAc...) asparagine glycosylation occurs at Asn-322. Residues Cys-344 and Cys-361 are joined by a disulfide bond. 345–346 (HP) serves as a coordination point for substrate. His-374 serves as a coordination point for Zn(2+). Glu-375 serves as the catalytic Proton acceptor. Residues His-378 and Glu-402 each coordinate Zn(2+). Asn-432 carries an N-linked (GlcNAc...) asparagine glycan. Residues Trp-477 and Lys-481 each contribute to the chloride site. The Proton donor role is filled by His-505. Tyr-515 contributes to the substrate binding site. Cys-530 and Cys-542 are joined by a disulfide. Asn-546 carries N-linked (GlcNAc...) asparagine glycosylation. The Collectrin-like domain occupies 614 to 805 (ADQSIKVRIS…QNTDDVQTSF (192 aa)). The tract at residues 652–659 (RKYFLEVK) is essential for cleavage by ADAM17. Asn-690 carries N-linked (GlcNAc...) asparagine glycosylation. The interval 697–716 (RTEVEKAIRMSRSRINDAFR) is essential for cleavage by TMPRSS11D and TMPRSS2. The helical transmembrane segment at 741-761 (IWLIVFGVVMGVIVVGIVVLI) threads the bilayer. The Cytoplasmic portion of the chain corresponds to 762-805 (FTGIRDRKKKNKARNEENPYASIDISKGENNPGFQNTDDVQTSF). Residues 772-805 (NKARNEENPYASIDISKGENNPGFQNTDDVQTSF) are disordered. The LIR motif lies at 778 to 786 (ENPYASIDI). At Tyr-781 the chain carries Phosphotyrosine. The Endocytic sorting signal signature appears at 781-784 (YASI). Residues 781-785 (YASID) carry the SH2-binding motif. Ser-783 carries the post-translational modification Phosphoserine. Residue Lys-788 forms a Glycyl lysine isopeptide (Lys-Gly) (interchain with G-Cter in ubiquitin) linkage. Over residues 789-805 (GENNPGFQNTDDVQTSF) the composition is skewed to polar residues. Residues 792 to 795 (NPGF) carry the PTB motif. The short motif at 803–805 (TSF) is the PDZ-binding element.

The protein belongs to the peptidase M2 family. As to quaternary structure, homodimer. Interacts with the catalytically active form of TMPRSS2. Interacts with SLC6A19; this interaction is essential for expression and function of SLC6A19 in intestine. Interacts with ITGA5:ITGB1. Probably interacts (via endocytic sorting signal motif) with AP2M1; the interaction is inhibited by phosphorylation of Tyr-781. Interacts (via PDZ-binding motif) with NHERF1 (via PDZ domains); the interaction may enhance ACE2 membrane residence. The cofactor is Zn(2+). Chloride is required as a cofactor. In terms of processing, proteolytic cleavage by ADAM17 generates a secreted form. Also cleaved by serine proteases: TMPRSS2, TMPRSS11D and HPN/TMPRSS1. Phosphorylated. Phosphorylation at Tyr-781 probably inhibits interaction with AP2M1 and enables interactions with proteins containing SH2 domains. Post-translationally, ubiquitinated. Ubiquitinated on Lys-788 via 'Lys-48'-linked ubiquitin. 'Lys-48'-linked deubiquitinated by USP50 on the Lys-788; leading to its stabilization.

The protein localises to the secreted. Its subcellular location is the cell membrane. It localises to the cytoplasm. The protein resides in the cell projection. It is found in the cilium. The protein localises to the apical cell membrane. It carries out the reaction angiotensin II + H2O = angiotensin-(1-7) + L-phenylalanine. It catalyses the reaction angiotensin I + H2O = angiotensin-(1-9) + L-leucine. The catalysed reaction is bradykinin(1-8) + H2O = bradykinin(1-7) + L-phenylalanine. The enzyme catalyses neurotensin + H2O = neurotensin-(1-12) + L-leucine. It carries out the reaction kinetensin + H2O = kinetensin-(1-8) + L-leucine. It catalyses the reaction dynorphin A-(1-13) + H2O = dynorphin A-(1-12) + L-lysine. The catalysed reaction is apelin-13 + H2O = apelin-12 + L-phenylalanine. The enzyme catalyses [Pyr1]apelin-13 + H2O = [Pyr1]apelin-12 + L-phenylalanine. It carries out the reaction apelin-17 + H2O = apelin-16 + L-phenylalanine. Its function is as follows. Essential counter-regulatory carboxypeptidase of the renin-angiotensin hormone system that is a critical regulator of blood volume, systemic vascular resistance, and thus cardiovascular homeostasis. Converts angiotensin I to angiotensin 1-9, a nine-amino acid peptide with anti-hypertrophic effects in cardiomyocytes, and angiotensin II to angiotensin 1-7, which then acts as a beneficial vasodilator and anti-proliferation agent, counterbalancing the actions of the vasoconstrictor angiotensin II. Also removes the C-terminal residue from three other vasoactive peptides, neurotensin, kinetensin, and des-Arg bradykinin, but is not active on bradykinin. Also cleaves other biological peptides, such as apelins, casomorphins and dynorphin A. Plays an important role in amino acid transport by acting as binding partner of amino acid transporter SLC6A19 in intestine, regulating trafficking, expression on the cell surface, and its catalytic activity. The protein is Angiotensin-converting enzyme 2 (ACE2) of Pongo abelii (Sumatran orangutan).